We begin with the raw amino-acid sequence, 506 residues long: ATP synthase subunit alpha (506 aa).

169 to 176 (GDRQTGKT) is an ATP binding site.

Belongs to the ATPase alpha/beta chains family. As to quaternary structure, F-type ATPases have 2 components, CF(1) - the catalytic core - and CF(0) - the membrane proton channel. CF(1) has five subunits: alpha(3), beta(3), gamma(1), delta(1), epsilon(1). CF(0) has three main subunits: a(1), b(2) and c(9-12). The alpha and beta chains form an alternating ring which encloses part of the gamma chain. CF(1) is attached to CF(0) by a central stalk formed by the gamma and epsilon chains, while a peripheral stalk is formed by the delta and b chains.

It localises to the cell membrane. The catalysed reaction is ATP + H2O + 4 H(+)(in) = ADP + phosphate + 5 H(+)(out). Its function is as follows. Produces ATP from ADP in the presence of a proton gradient across the membrane. The alpha chain is a regulatory subunit. The sequence is that of ATP synthase subunit alpha from Acetivibrio thermocellus (strain ATCC 27405 / DSM 1237 / JCM 9322 / NBRC 103400 / NCIMB 10682 / NRRL B-4536 / VPI 7372) (Clostridium thermocellum).